The sequence spans 122 residues: Putative iron-sulfur cluster insertion protein ErpA (122 aa).

Iron-sulfur cluster-binding residues include C50, C114, and C116.

This sequence belongs to the HesB/IscA family. Homodimer. Iron-sulfur cluster serves as cofactor.

Functionally, required for insertion of 4Fe-4S clusters. In Burkholderia mallei (strain NCTC 10247), this protein is Putative iron-sulfur cluster insertion protein ErpA.